We begin with the raw amino-acid sequence, 572 residues long: Squalene synthase (572 aa).

2 helical membrane-spanning segments follow: residues 316-336 (SVFN…ELMF) and 492-512 (FFLI…LITW).

Belongs to the phytoene/squalene synthase family. Monomer. Requires Mg(2+) as cofactor.

The protein localises to the endoplasmic reticulum membrane. The enzyme catalyses 2 (2E,6E)-farnesyl diphosphate + NADPH + H(+) = squalene + 2 diphosphate + NADP(+). It carries out the reaction 2 (2E,6E)-farnesyl diphosphate + NADH + H(+) = squalene + 2 diphosphate + NAD(+). It functions in the pathway terpene metabolism; lanosterol biosynthesis; lanosterol from farnesyl diphosphate: step 1/3. Functionally, catalyzes the condensation of 2 two farnesyl pyrophosphate moieties to form squalene. It is the first committed enzyme of the sterol biosynthesis pathway. Required for the biosynthesis of ergosterol. This chain is Squalene synthase (ERG9), found in Mycosarcoma maydis (Corn smut fungus).